The chain runs to 523 residues: Cyclin-dependent kinase 17 (523 aa).

S9 carries the post-translational modification Phosphoserine. Residues 30–55 are disordered; sequence TIEENSSKDNEPIVKNGRPPTSHSMH. A phosphoserine mark is found at S80, S92, and S105. A disordered region spans residues 103-123; sequence MGSDGESDQASGTSSDEVQSP. A compositionally biased stretch (polar residues) spans 110–123; that stretch reads DQASGTSSDEVQSP. S137, S146, S165, and S180 each carry phosphoserine. The region spanning 192 to 473 is the Protein kinase domain; sequence YIKLEKLGEG…AEEAMKHVYF (282 aa). Residues 198–206 and K221 contribute to the ATP site; that span reads LGEGTYATV. D313 acts as the Proton acceptor in catalysis. The segment at 501–523 is disordered; the sequence is PGFRNSSYPETGHGKNRRQSMLF. The segment covering 514-523 has biased composition (basic residues); it reads GKNRRQSMLF.

The protein belongs to the protein kinase superfamily. CMGC Ser/Thr protein kinase family. CDC2/CDKX subfamily. In terms of assembly, found in a complex containing CABLES1, CDK16 and TDRD7. Interacts with TDRD7.

It carries out the reaction L-seryl-[protein] + ATP = O-phospho-L-seryl-[protein] + ADP + H(+). The enzyme catalyses L-threonyl-[protein] + ATP = O-phospho-L-threonyl-[protein] + ADP + H(+). Its function is as follows. May play a role in terminally differentiated neurons. Has a Ser/Thr-phosphorylating activity for histone H1. This Homo sapiens (Human) protein is Cyclin-dependent kinase 17 (CDK17).